The primary structure comprises 210 residues: Ribosomal RNA small subunit methyltransferase G (210 aa).

S-adenosyl-L-methionine-binding positions include Gly-80, Leu-85, 131 to 132 (VE), and Arg-146.

Belongs to the methyltransferase superfamily. RNA methyltransferase RsmG family.

Its subcellular location is the cytoplasm. The catalysed reaction is guanosine(527) in 16S rRNA + S-adenosyl-L-methionine = N(7)-methylguanosine(527) in 16S rRNA + S-adenosyl-L-homocysteine. Functionally, specifically methylates the N7 position of guanine in position 527 of 16S rRNA. This is Ribosomal RNA small subunit methyltransferase G from Pasteurella multocida (strain Pm70).